A 115-amino-acid polypeptide reads, in one-letter code: Cytochrome c (115 aa).

The heme c site is built by cysteine 26, cysteine 29, histidine 30, and methionine 91.

Belongs to the cytochrome c family. In terms of processing, binds 1 heme c group covalently per subunit.

The protein localises to the mitochondrion intermembrane space. In terms of biological role, electron carrier protein. The oxidized form of the cytochrome c heme group can accept an electron from the heme group of the cytochrome c1 subunit of cytochrome reductase. Cytochrome c then transfers this electron to the cytochrome oxidase complex, the final protein carrier in the mitochondrial electron-transport chain. The polypeptide is Cytochrome c (Theileria parva (East coast fever infection agent)).